The chain runs to 323 residues: Methenyltetrahydromethanopterin cyclohydrolase (323 aa).

The protein belongs to the MCH family.

It localises to the cytoplasm. The enzyme catalyses 5,10-methenyl-5,6,7,8-tetrahydromethanopterin + H2O = N(5)-formyl-5,6,7,8-tetrahydromethanopterin + H(+). The protein operates within one-carbon metabolism; methanogenesis from CO(2); 5,10-methenyl-5,6,7,8-tetrahydromethanopterin from CO(2): step 3/3. Functionally, catalyzes the reversible interconversion of 5-formyl-H(4)MPT to methenyl-H(4)MPT(+). This is Methenyltetrahydromethanopterin cyclohydrolase from Methanococcus maripaludis (strain DSM 14266 / JCM 13030 / NBRC 101832 / S2 / LL).